The following is a 499-amino-acid chain: DNA-directed RNA polymerase subunit Rpo2N (499 aa).

This sequence belongs to the RNA polymerase beta chain family. As to quaternary structure, part of the RNA polymerase complex.

It is found in the cytoplasm. It catalyses the reaction RNA(n) + a ribonucleoside 5'-triphosphate = RNA(n+1) + diphosphate. DNA-dependent RNA polymerase (RNAP) catalyzes the transcription of DNA into RNA using the four ribonucleoside triphosphates as substrates. The Rpo2 subunit (Rpo2N and Rpo2C in this organism) is implicated in DNA promoter recognition and in nucleotide binding. This chain is DNA-directed RNA polymerase subunit Rpo2N, found in Methanococcus vannielii (strain ATCC 35089 / DSM 1224 / JCM 13029 / OCM 148 / SB).